The primary structure comprises 117 residues: Large ribosomal subunit protein bL20 (117 aa).

Belongs to the bacterial ribosomal protein bL20 family.

Its function is as follows. Binds directly to 23S ribosomal RNA and is necessary for the in vitro assembly process of the 50S ribosomal subunit. It is not involved in the protein synthesizing functions of that subunit. The chain is Large ribosomal subunit protein bL20 from Streptococcus suis (strain 05ZYH33).